The primary structure comprises 920 residues: Whirlin (920 aa).

The region spanning 141–224 (LVSLRRAKAH…LVLSVYSAGR (84 aa)) is the PDZ 1 domain. A disordered region spans residues 241-262 (QGRSTSPPSSLPHGSTLRQHED). Residues 242–257 (GRSTSPPSSLPHGSTL) are compositionally biased toward polar residues. Positions 278–360 (KVNLVLGDGR…LILTVKDVGR (83 aa)) constitute a PDZ 2 domain. Disordered regions lie at residues 502–536 (MKARQPPGPGVGDTYSMVSYSDTGSSTGSHGTSTT), 561–603 (CETT…QGHD), 630–730 (FSAP…AMGA), and 752–828 (RALP…PTST). A compositionally biased stretch (low complexity) spans 520–536 (SYSDTGSSTGSHGTSTT). Positions 561–570 (CETTQGSTNA) are enriched in polar residues. Pro residues-rich tracts occupy residues 589–598 (IKPPPPPPPL) and 636–651 (RSPPPPPGIAPTPTPG). A compositionally biased stretch (polar residues) spans 655 to 674 (ARDSPSSPIYASISHANPSS). S698 is modified (phosphoserine). Polar residues-rich tracts occupy residues 756–775 (QTRTASTLSQLSDSGQTLSE) and 785–800 (EASTSGRGRQTANTKN). Basic and acidic residues predominate over residues 802-813 (NGKELPQTERTT). In terms of domain architecture, PDZ 3 spans 829 to 912 (LIRVRKSAAT…TKERDYIDFL (84 aa)).

In terms of assembly, forms homooligomers. Interacts (via C-terminal PDZ domain) with MYO15A; this interaction is necessary for localization of WHRN to stereocilia tips. Interacts (via C-terminal PDZ domain) with MPP1/p55. Interacts with LRRC4C/NGL1. Interacts with MYO7A. Interacts with RPGR. Interacts with EPS8. Interacts with CASK. Interacts with CIB2. Component of USH2 complex, composed of ADGRV1, PDZD7, USH2A and WHRN. Interacts (via PDZ domains) with PDZD7; the interaction is direct. Interacts (via N-terminal PDZ domain) with USH2A (via cytoplasmic region). Interacts with ADGRV1/MASS1 (via cytoplasmic region). As to expression, ubiquitous. Highly expressed in heart, spleen, lung and liver. Highly expressed in brain, in the olfactory bulb, thalamus, layers III-V of the cerebral cortex and the molecular layer of cerebellum. Detected in soma and dendrites of thalamic neurons, and in cerebrum in cell bodies and apical dendrites of pyramidal neurons. Expressed in retina and inner ear.

It localises to the cytoplasm. The protein localises to the cell projection. It is found in the stereocilium. The protein resides in the growth cone. Its subcellular location is the synapse. Its function is as follows. Involved in hearing and vision as member of the USH2 complex. Necessary for elongation and maintenance of inner and outer hair cell stereocilia in the organ of Corti in the inner ear. Involved in the maintenance of the hair bundle ankle region, which connects stereocilia in cochlear hair cells of the inner ear. In retina photoreceptors, required for the maintenance of periciliary membrane complex that seems to play a role in regulating intracellular protein transport. This Rattus norvegicus (Rat) protein is Whirlin.